We begin with the raw amino-acid sequence, 75 residues long: CLAVATA3/ESR (CLE)-related protein 33 (75 aa).

A signal peptide spans 1–22 (MASWRMLCFVLLFTSILICHDA). A hydroxyproline mark is found at Pro67 and Pro70. Residue Pro70 is glycosylated (O-linked (Ara...) hydroxyproline).

This sequence belongs to the CLV3/ESR signal peptide family. In terms of processing, the O-glycosylation (arabinosylation) of the hydroxyproline Pro-70 enhances binding affinity of the CLE33p peptide for its receptor. In terms of tissue distribution, expressed in root vasculature.

It localises to the secreted. It is found in the extracellular space. Its function is as follows. Signaling peptide involved in the regulation of root colonization by arbuscular mycorrhizal (AM) fungi. Moves from root to shoot to function with the receptor kinase SUNN, in a signaling pathway that repress strigolactone biosynthetic genes and strigolactone content in the roots, and consequently reduces the promotion of further colonization by AM fungi. The chain is CLAVATA3/ESR (CLE)-related protein 33 from Medicago truncatula (Barrel medic).